The primary structure comprises 105 residues: Small ribosomal subunit protein uS10 (105 aa).

This sequence belongs to the universal ribosomal protein uS10 family. Part of the 30S ribosomal subunit.

In terms of biological role, involved in the binding of tRNA to the ribosomes. In Trichodesmium erythraeum (strain IMS101), this protein is Small ribosomal subunit protein uS10.